The chain runs to 194 residues: Archaetidylinositol phosphate synthase (194 aa).

2 helical membrane-spanning segments follow: residues 32 to 51 (IYTL…WLYI) and 58 to 78 (LLIA…RFTG). Residues Asp-67, Asp-70, Asp-88, and Asp-92 each contribute to the Mg(2+) site. Asp-92 (proton acceptor) is an active-site residue. The next 3 membrane-spanning stretches (helical) occupy residues 103 to 123 (LYIA…GLIV), 150 to 170 (IAIL…LALA), and 172 to 192 (AAAV…AGEL).

It belongs to the CDP-alcohol phosphatidyltransferase class-I family. Mn(2+) serves as cofactor. It depends on Mg(2+) as a cofactor.

The protein resides in the cell membrane. It catalyses the reaction CDP-2,3-bis-O-(phytanyl)-sn-glycerol + 1D-myo-inositol 3-phosphate = saturated 1-archaetidyl-1D-myo-inositol 3-phosphate + CMP + H(+). It functions in the pathway lipid metabolism; phospholipid metabolism. Catalyzes the formation of archaetidylinositol phosphate (AIP) from CDP-archaeol (CDP-ArOH or CDP-2,3-bis-(O-phytanyl)-sn-glycerol) and 1L-myo-inositol 1-phosphate (IP or 1D-myo-inositol 3-phosphate). AIP is a precursor of archaetidyl-myo-inositol (AI), an ether-type inositol phospholipid ubiquitously distributed in archaea membranes and essential for glycolipid biosynthesis in archaea. The chain is Archaetidylinositol phosphate synthase from Aeropyrum pernix (strain ATCC 700893 / DSM 11879 / JCM 9820 / NBRC 100138 / K1).